A 188-amino-acid polypeptide reads, in one-letter code: Elongation factor P (188 aa).

The protein belongs to the elongation factor P family.

Its subcellular location is the cytoplasm. Its pathway is protein biosynthesis; polypeptide chain elongation. Involved in peptide bond synthesis. Stimulates efficient translation and peptide-bond synthesis on native or reconstituted 70S ribosomes in vitro. Probably functions indirectly by altering the affinity of the ribosome for aminoacyl-tRNA, thus increasing their reactivity as acceptors for peptidyl transferase. The sequence is that of Elongation factor P from Stutzerimonas stutzeri (strain A1501) (Pseudomonas stutzeri).